The chain runs to 241 residues: 1-Cys peroxiredoxin (241 aa).

One can recognise a Thioredoxin domain in the interval 33 to 189 (LRIGDVVPDF…IIRILDSFQL (157 aa)). Cysteine 75 (cysteine sulfenic acid (-SOH) intermediate) is an active-site residue.

The protein belongs to the peroxiredoxin family. Prx6 subfamily. In terms of assembly, homodimer.

It catalyses the reaction a hydroperoxide + [thioredoxin]-dithiol = an alcohol + [thioredoxin]-disulfide + H2O. Functionally, thiol-specific peroxidase that catalyzes the reduction of hydrogen peroxide and organic hydroperoxides to water and alcohols, respectively. Plays a role in cell protection against oxidative stress by detoxifying peroxides. The chain is 1-Cys peroxiredoxin from Dictyostelium discoideum (Social amoeba).